Here is a 104-residue protein sequence, read N- to C-terminus: Large ribosomal subunit protein bL21 (104 aa).

Belongs to the bacterial ribosomal protein bL21 family. As to quaternary structure, part of the 50S ribosomal subunit. Contacts protein L20.

Functionally, this protein binds to 23S rRNA in the presence of protein L20. In Francisella philomiragia subsp. philomiragia (strain ATCC 25017 / CCUG 19701 / FSC 153 / O#319-036), this protein is Large ribosomal subunit protein bL21.